The primary structure comprises 250 residues: MNQILLCSQILLLFFTVANCDGEHQLDSSVDLKSAVLKNVAPKNVATQAEIVKDDVALKSGKKGDYVMDIEVSDMPLDDYPINNSKSRKNSSTLPSPILTDKLNQGSNQIALKALKHRLVMEQNNNLFLRNHSVSLMNEIEARKTDIIQARQLNIDLELELESLKRKLSEMNVQNARKSTKSCKKRPSKDIAPPVNQLQEVIVKNTYRNKYLTLLTQLAQKINYEIANVNNPATDVPTGKSPSEGNPSTT.

A signal peptide spans 1–18; it reads MNQILLCSQILLLFFTVA. The interval 79-100 is disordered; it reads DYPINNSKSRKNSSTLPSPILT. Over residues 82–95 the composition is skewed to polar residues; the sequence is INNSKSRKNSSTLP. 3 N-linked (GlcNAc...) asparagine glycosylation sites follow: asparagine 83, asparagine 90, and asparagine 131. 2 disordered regions span residues 172–191 and 230–250; these read NVQN…SKDI and NNPA…PSTT. Residues 178 to 187 are compositionally biased toward basic residues; the sequence is KSTKSCKKRP. Residues 240 to 250 show a composition bias toward polar residues; it reads KSPSEGNPSTT.

Post-translationally, proteolytically cleaved as it is secreted and in the recipient female. Main cells of the accessory glands of males.

The protein localises to the secreted. Its subcellular location is the extracellular space. Its function is as follows. This protein is transferred from male to female's hemolymph during mating, affecting egglaying and behavior after mating. The polypeptide is Accessory gland-specific peptide 26Aa (Acp26Aa) (Drosophila mauritiana (Fruit fly)).